Here is a 186-residue protein sequence, read N- to C-terminus: uncharacterized protein (186 aa).

It belongs to the MG032/MG096/MG288 family.

This is an uncharacterized protein from Mycoplasma pneumoniae (strain ATCC 29342 / M129 / Subtype 1) (Mycoplasmoides pneumoniae).